The chain runs to 83 residues: Small ribosomal subunit protein uS15c (83 aa).

It belongs to the universal ribosomal protein uS15 family. In terms of assembly, part of the 30S ribosomal subunit.

It localises to the plastid. It is found in the chloroplast. This is Small ribosomal subunit protein uS15c (rps15) from Fagopyrum esculentum subsp. ancestrale (Wild buckwheat).